Reading from the N-terminus, the 414-residue chain is Small ribosomal subunit protein mS46 (414 aa).

The segment covering 20-35 (LNAQQQQRPFSSTTTR) has biased composition (polar residues). 2 disordered regions span residues 20-71 (LNAQ…EAAV) and 168-229 (AGPG…DAPP). 2 stretches are compositionally biased toward low complexity: residues 45 to 59 (PAAAPSTPRAAAPGP) and 168 to 200 (AGPGAAAGRPRFGAAASPGAGPTGAARRPPFGA). A compositionally biased stretch (basic and acidic residues) spans 205 to 224 (PAGDKKRSGGSGDKRPRGDD).

The protein belongs to the mitochondrion-specific ribosomal protein mS46 family. In terms of assembly, component of the mitochondrial small ribosomal subunit (mt-SSU). Mature N.crassa 74S mitochondrial ribosomes consist of a small (37S) and a large (54S) subunit. The 37S small subunit contains a 16S ribosomal RNA (16S mt-rRNA) and 32 different proteins. The 54S large subunit contains a 23S rRNA (23S mt-rRNA) and 42 different proteins.

The protein localises to the mitochondrion. Its function is as follows. Component of the mitochondrial ribosome (mitoribosome), a dedicated translation machinery responsible for the synthesis of mitochondrial genome-encoded proteins, including at least some of the essential transmembrane subunits of the mitochondrial respiratory chain. The mitoribosomes are attached to the mitochondrial inner membrane and translation products are cotranslationally integrated into the membrane. The sequence is that of Small ribosomal subunit protein mS46 (rsm28) from Neurospora crassa (strain ATCC 24698 / 74-OR23-1A / CBS 708.71 / DSM 1257 / FGSC 987).